The following is a 380-amino-acid chain: Alcohol dehydrogenase 2 (380 aa).

8 residues coordinate Zn(2+): cysteine 48, threonine 50, histidine 70, cysteine 100, cysteine 103, cysteine 106, cysteine 114, and cysteine 178. Threonine 50 and histidine 70 together coordinate an alcohol. Threonine 50 is a binding site for NAD(+). NAD(+)-binding positions include 203–208 (GLGAVG), aspartate 227, arginine 232, threonine 273, valine 296, 296–298 (VGV), phenylalanine 323, and arginine 373.

It belongs to the zinc-containing alcohol dehydrogenase family. As to quaternary structure, homodimer. Homotetramer. Zn(2+) is required as a cofactor.

Its subcellular location is the cytoplasm. The catalysed reaction is a primary alcohol + NAD(+) = an aldehyde + NADH + H(+). The enzyme catalyses a secondary alcohol + NAD(+) = a ketone + NADH + H(+). The protein is Alcohol dehydrogenase 2 (ADH2) of Solanum tuberosum (Potato).